The following is a 461-amino-acid chain: V-type ATP synthase beta chain (461 aa).

Belongs to the ATPase alpha/beta chains family.

Its function is as follows. Produces ATP from ADP in the presence of a proton gradient across the membrane. The V-type beta chain is a regulatory subunit. This is V-type ATP synthase beta chain from Clostridium botulinum (strain ATCC 19397 / Type A).